The primary structure comprises 138 residues: Large ribosomal subunit protein uL16 (138 aa).

The span at 1–13 shows a compositional bias: basic residues; it reads MLQPKRRKYRKEQ. The disordered stretch occupies residues 1 to 24; sequence MLQPKRRKYRKEQKGRNTGKATRG.

This sequence belongs to the universal ribosomal protein uL16 family. Part of the 50S ribosomal subunit.

In terms of biological role, binds 23S rRNA and is also seen to make contacts with the A and possibly P site tRNAs. In Cupriavidus necator (strain ATCC 17699 / DSM 428 / KCTC 22496 / NCIMB 10442 / H16 / Stanier 337) (Ralstonia eutropha), this protein is Large ribosomal subunit protein uL16.